The chain runs to 955 residues: Glycine dehydrogenase (decarboxylating) (955 aa).

Position 702 is an N6-(pyridoxal phosphate)lysine (Lys-702).

Belongs to the GcvP family. The glycine cleavage system is composed of four proteins: P, T, L and H. Pyridoxal 5'-phosphate is required as a cofactor.

The enzyme catalyses N(6)-[(R)-lipoyl]-L-lysyl-[glycine-cleavage complex H protein] + glycine + H(+) = N(6)-[(R)-S(8)-aminomethyldihydrolipoyl]-L-lysyl-[glycine-cleavage complex H protein] + CO2. In terms of biological role, the glycine cleavage system catalyzes the degradation of glycine. The P protein binds the alpha-amino group of glycine through its pyridoxal phosphate cofactor; CO(2) is released and the remaining methylamine moiety is then transferred to the lipoamide cofactor of the H protein. In Bradyrhizobium diazoefficiens (strain JCM 10833 / BCRC 13528 / IAM 13628 / NBRC 14792 / USDA 110), this protein is Glycine dehydrogenase (decarboxylating).